A 394-amino-acid chain; its full sequence is Acid ceramidase (394 aa).

The first 20 residues, 1 to 20, serve as a signal peptide directing secretion; that stretch reads MLGRSLLTWVLAAAVTCAQA. Cys30 and Cys339 form a disulfide bridge. Cys142 acts as the Nucleophile in catalysis. N-linked (GlcNAc...) asparagine glycosylation is found at Asn194, Asn258, Asn285, and Asn341. An intrachain disulfide couples Cys387 to Cys391.

The protein belongs to the acid ceramidase family. Heterodimer; disulfide-linked. The heterodimer is composed of the disulfide-linked alpha and beta chains produced by autocatalytic cleavage of the precursor. Post-translationally, N-glycosylated. In terms of processing, proteolytically cleaved into two chains alpha and beta that remain associated via a disulfide bond. Cleavage gives rise to a conformation change that activates the enzyme. The same catalytic Cys residue mediates the autoproteolytic cleavage and subsequent hydrolysis of lipid substrates. The beta chain may undergo an additional C-terminal processing.

The protein resides in the lysosome. It localises to the secreted. It carries out the reaction an N-acylsphing-4-enine + H2O = sphing-4-enine + a fatty acid. The catalysed reaction is N-dodecanoylsphing-4-enine + H2O = dodecanoate + sphing-4-enine. The enzyme catalyses N-tetradecanoylsphing-4-enine + H2O = tetradecanoate + sphing-4-enine. It catalyses the reaction N-hexadecanoylsphing-4-enine + H2O = sphing-4-enine + hexadecanoate. It carries out the reaction N-octadecanoylsphing-4-enine + H2O = sphing-4-enine + octadecanoate. The catalysed reaction is N-dodecanoyl-(4R)-hydroxysphinganine + H2O = (4R)-hydroxysphinganine + dodecanoate. The enzyme catalyses N-(dodecanoyl)-sphinganine + H2O = dodecanoate + sphinganine. It catalyses the reaction N-(acetyl)-sphing-4-enine + H2O = sphing-4-enine + acetate. It carries out the reaction N-(hexanoyl)sphing-4-enine + H2O = hexanoate + sphing-4-enine. The catalysed reaction is N-octanoylsphing-4-enine + H2O = octanoate + sphing-4-enine. The enzyme catalyses N-(9Z-octadecenoyl)-sphing-4-enine + H2O = sphing-4-enine + (9Z)-octadecenoate. It catalyses the reaction N-dodecanoylethanolamine + H2O = dodecanoate + ethanolamine. It functions in the pathway lipid metabolism; sphingolipid metabolism. Its function is as follows. Lysosomal ceramidase that hydrolyzes sphingolipid ceramides into sphingosine and free fatty acids at acidic pH. Ceramides, sphingosine, and its phosphorylated form sphingosine-1-phosphate are bioactive lipids that mediate cellular signaling pathways regulating several biological processes including cell proliferation, apoptosis and differentiation. Has a higher catalytic efficiency towards C12-ceramides versus other ceramides. Also catalyzes the reverse reaction allowing the synthesis of ceramides from fatty acids and sphingosine. For the reverse synthetic reaction, the natural sphingosine D-erythro isomer is more efficiently utilized as a substrate compared to D-erythro-dihydrosphingosine and D-erythro-phytosphingosine, while the fatty acids with chain lengths of 12 or 14 carbons are the most efficiently used. Also has an N-acylethanolamine hydrolase activity. By regulating the levels of ceramides, sphingosine and sphingosine-1-phosphate in the epidermis, mediates the calcium-induced differentiation of epidermal keratinocytes. Also indirectly regulates tumor necrosis factor/TNF-induced apoptosis. By regulating the intracellular balance between ceramides and sphingosine, in adrenocortical cells, probably also acts as a regulator of steroidogenesis. In Rattus norvegicus (Rat), this protein is Acid ceramidase.